The sequence spans 318 residues: Bis(5'-nucleosyl)-tetraphosphatase, symmetrical (318 aa).

The segment at 269 to 318 (PGREVTGPAPVARAPRRPRERLGRQRSRGNRGNAGNTAVPAKPQVDTPQD) is disordered. Basic residues predominate over residues 282–297 (APRRPRERLGRQRSRG).

The protein belongs to the Ap4A hydrolase family.

It carries out the reaction P(1),P(4)-bis(5'-adenosyl) tetraphosphate + H2O = 2 ADP + 2 H(+). Functionally, hydrolyzes diadenosine 5',5'''-P1,P4-tetraphosphate to yield ADP. This Xanthomonas oryzae pv. oryzae (strain KACC10331 / KXO85) protein is Bis(5'-nucleosyl)-tetraphosphatase, symmetrical.